Consider the following 352-residue polypeptide: Protein pelota homolog (352 aa).

The protein belongs to the eukaryotic release factor 1 family. Pelota subfamily. As to quaternary structure, monomer. Requires a divalent metal cation as cofactor.

It localises to the cytoplasm. Its function is as follows. May function in recognizing stalled ribosomes, interact with stem-loop structures in stalled mRNA molecules, and effect endonucleolytic cleavage of the mRNA. May play a role in the release non-functional ribosomes and degradation of damaged mRNAs. Has endoribonuclease activity. In Thermofilum pendens (strain DSM 2475 / Hrk 5), this protein is Protein pelota homolog.